A 108-amino-acid chain; its full sequence is Phosphoribosyl-ATP pyrophosphatase (108 aa).

Residues 88 to 108 are disordered; sequence VENELDRREGRSGIEEKASRK. Basic and acidic residues predominate over residues 91–108; sequence ELDRREGRSGIEEKASRK.

The protein belongs to the PRA-PH family.

Its subcellular location is the cytoplasm. It catalyses the reaction 1-(5-phospho-beta-D-ribosyl)-ATP + H2O = 1-(5-phospho-beta-D-ribosyl)-5'-AMP + diphosphate + H(+). It functions in the pathway amino-acid biosynthesis; L-histidine biosynthesis; L-histidine from 5-phospho-alpha-D-ribose 1-diphosphate: step 2/9. The sequence is that of Phosphoribosyl-ATP pyrophosphatase from Paracoccus denitrificans (strain Pd 1222).